A 486-amino-acid chain; its full sequence is Cardiolipin synthase A (486 aa).

The next 2 helical transmembrane spans lie at 3–23 and 38–58; these read IFYDLIKWLVVLIYWLLIANI and MSWLLTIYIIPFIGIAIWFFF. 2 PLD phosphodiesterase domains span residues 219–246 and 399–426; these read LDVRQHRKIILIDNYISYSGSMNLVDPY and KKGLLHSKSILIDQQLSLIGTVNLDMRS. Residues histidine 224, lysine 226, aspartate 231, histidine 404, lysine 406, and aspartate 411 contribute to the active site.

It belongs to the phospholipase D family. Cardiolipin synthase subfamily. ClsA sub-subfamily.

The protein resides in the cell inner membrane. It catalyses the reaction 2 a 1,2-diacyl-sn-glycero-3-phospho-(1'-sn-glycerol) = a cardiolipin + glycerol. Catalyzes the reversible phosphatidyl group transfer from one phosphatidylglycerol molecule to another to form cardiolipin (CL) (diphosphatidylglycerol) and glycerol. In Buchnera aphidicola subsp. Schizaphis graminum (strain Sg), this protein is Cardiolipin synthase A.